Here is a 298-residue protein sequence, read N- to C-terminus: ATP synthase gamma chain (298 aa).

The protein belongs to the ATPase gamma chain family. F-type ATPases have 2 components, CF(1) - the catalytic core - and CF(0) - the membrane proton channel. CF(1) has five subunits: alpha(3), beta(3), gamma(1), delta(1), epsilon(1). CF(0) has three main subunits: a, b and c.

The protein localises to the cell membrane. Produces ATP from ADP in the presence of a proton gradient across the membrane. The gamma chain is believed to be important in regulating ATPase activity and the flow of protons through the CF(0) complex. This is ATP synthase gamma chain from Mycobacterium leprae (strain Br4923).